Consider the following 278-residue polypeptide: MSDVDAAVDLAAALGDIDTATPLVNSVTNNVTVNDVANITLHWGGLPVMSDDAREVDDMVATADGCLINMGTVDEDGEESMVVAGTAANEGDKPLVVDPVGVGATPTRTRVANRLLDELDVTILNGNHGEITALAGDDADVRGVESVGEYADIAETALSCARTHDTVVVASGETDIVASPEEAYEITAGHPLMAQIVGTGCMLGVTLATFAAGMENATPLDAALAGTVGFGLAGEKAAEEGEYNGPASYKTAFLDTVAGLEAAPDDPAGRIERVLSVT.

Residue Met-49 coordinates substrate. Asn-125 and Ser-171 together coordinate ATP. Gly-198 lines the substrate pocket.

Belongs to the Thz kinase family. Mg(2+) serves as cofactor.

The enzyme catalyses 5-(2-hydroxyethyl)-4-methylthiazole + ATP = 4-methyl-5-(2-phosphooxyethyl)-thiazole + ADP + H(+). Its pathway is cofactor biosynthesis; thiamine diphosphate biosynthesis; 4-methyl-5-(2-phosphoethyl)-thiazole from 5-(2-hydroxyethyl)-4-methylthiazole: step 1/1. In terms of biological role, catalyzes the phosphorylation of the hydroxyl group of 4-methyl-5-beta-hydroxyethylthiazole (THZ). In Natronomonas pharaonis (strain ATCC 35678 / DSM 2160 / CIP 103997 / JCM 8858 / NBRC 14720 / NCIMB 2260 / Gabara) (Halobacterium pharaonis), this protein is Hydroxyethylthiazole kinase.